The following is a 263-amino-acid chain: Translation initiation factor 2 subunit alpha (263 aa).

An S1 motif domain is found at 12 to 83 (GEILIATVKQ…RKGTIDVSLK (72 aa)).

The protein belongs to the eIF-2-alpha family. In terms of assembly, heterotrimer composed of an alpha, a beta and a gamma chain.

Its function is as follows. eIF-2 functions in the early steps of protein synthesis by forming a ternary complex with GTP and initiator tRNA. The polypeptide is Translation initiation factor 2 subunit alpha (Sulfurisphaera tokodaii (strain DSM 16993 / JCM 10545 / NBRC 100140 / 7) (Sulfolobus tokodaii)).